The primary structure comprises 159 residues: MINYLKSFFLYEIVRGMALTLKYFFKPKVTINYPYEKSPVSPRFKGEHALRRYENGEERCIACKLCEAICPAQAIVIEADERDDGSRRTTRYDIDMTKCIYCGLCQEACPVDAIVEGPNFEFASLTHTALIYDKERLLQNGDRWEQALASKLHKDYEYR.

4Fe-4S ferredoxin-type domains are found at residues 51-80 (RRYE…IEAD) and 90-119 (TRYD…EGPN). C60, C63, C66, C70, C99, C102, C105, and C109 together coordinate [4Fe-4S] cluster.

This sequence belongs to the complex I 23 kDa subunit family. In terms of assembly, NDH-1 is composed of 14 different subunits. Subunits NuoA, H, J, K, L, M, N constitute the membrane sector of the complex. It depends on [4Fe-4S] cluster as a cofactor.

It is found in the cell inner membrane. The enzyme catalyses a quinone + NADH + 5 H(+)(in) = a quinol + NAD(+) + 4 H(+)(out). Functionally, NDH-1 shuttles electrons from NADH, via FMN and iron-sulfur (Fe-S) centers, to quinones in the respiratory chain. The immediate electron acceptor for the enzyme in this species is believed to be ubiquinone. Couples the redox reaction to proton translocation (for every two electrons transferred, four hydrogen ions are translocated across the cytoplasmic membrane), and thus conserves the redox energy in a proton gradient. This Rickettsia felis (strain ATCC VR-1525 / URRWXCal2) (Rickettsia azadi) protein is NADH-quinone oxidoreductase subunit I.